The primary structure comprises 229 residues: MVSLRMHELPVNDQPRERLARLGAGALSDAELLAILLRVGISGTNVLQLAQQLLGEYGGWIGLQVADYNDLCRRTGIGASKAATIKAALEIGRRLARSSVEERYPIRSPGDVAALLMVEMSHLDQEHLRTVLLDTKHRVQQINTVYIGSLNSATIRIGEVFKEAVRRNSAAIIVVHNHPSGEATPSPEDIQVTRQLVAAGRLLDIEVLDHLIIGRGQYVSLRERGIGFE.

In terms of domain architecture, MPN spans 105-227 (PIRSPGDVAA…YVSLRERGIG (123 aa)). Zn(2+) is bound by residues histidine 176, histidine 178, and aspartate 189. A JAMM motif motif is present at residues 176 to 189 (HNHPSGEATPSPED).

Belongs to the UPF0758 family.

This chain is UPF0758 protein Cagg_0777, found in Chloroflexus aggregans (strain MD-66 / DSM 9485).